The following is a 139-amino-acid chain: Heat shock protein homolog C338.06c (139 aa).

Residues 27–139 (AWLSCWGPAL…EFTTRIVEIQ (113 aa)) form the sHSP domain.

The protein belongs to the small heat shock protein (HSP20) family.

The protein resides in the mitochondrion. The protein is Heat shock protein homolog C338.06c of Schizosaccharomyces pombe (strain 972 / ATCC 24843) (Fission yeast).